A 444-amino-acid chain; its full sequence is Argininosuccinate synthase (444 aa).

ATP-binding positions include 17 to 25 (AFSGGLDTS) and Ala-43. Residue Tyr-99 participates in L-citrulline binding. ATP contacts are provided by Gly-129 and Thr-131. L-aspartate contacts are provided by Thr-131, Asn-135, and Asp-136. Asn-135 lines the L-citrulline pocket. ATP is bound at residue Asp-136. The L-citrulline site is built by Arg-139 and Ser-192. Asp-194 contributes to the ATP binding site. 3 residues coordinate L-citrulline: Thr-201, Glu-203, and Glu-280.

This sequence belongs to the argininosuccinate synthase family. Type 2 subfamily. In terms of assembly, homotetramer.

It localises to the cytoplasm. It catalyses the reaction L-citrulline + L-aspartate + ATP = 2-(N(omega)-L-arginino)succinate + AMP + diphosphate + H(+). The protein operates within amino-acid biosynthesis; L-arginine biosynthesis; L-arginine from L-ornithine and carbamoyl phosphate: step 2/3. In Paraburkholderia phymatum (strain DSM 17167 / CIP 108236 / LMG 21445 / STM815) (Burkholderia phymatum), this protein is Argininosuccinate synthase.